Here is a 303-residue protein sequence, read N- to C-terminus: Signal recognition particle receptor FtsY (303 aa).

Residues 108-115, 190-194, and 254-257 contribute to the GTP site; these read GVNGAGKT, DTAGR, and TKLD.

The protein belongs to the GTP-binding SRP family. FtsY subfamily. As to quaternary structure, part of the signal recognition particle protein translocation system, which is composed of SRP and FtsY. SRP is a ribonucleoprotein composed of Ffh and a 4.5S RNA molecule.

The protein localises to the cell inner membrane. It localises to the cytoplasm. It catalyses the reaction GTP + H2O = GDP + phosphate + H(+). Involved in targeting and insertion of nascent membrane proteins into the cytoplasmic membrane. Acts as a receptor for the complex formed by the signal recognition particle (SRP) and the ribosome-nascent chain (RNC). Interaction with SRP-RNC leads to the transfer of the RNC complex to the Sec translocase for insertion into the membrane, the hydrolysis of GTP by both Ffh and FtsY, and the dissociation of the SRP-FtsY complex into the individual components. This is Signal recognition particle receptor FtsY from Rickettsia conorii (strain ATCC VR-613 / Malish 7).